A 417-amino-acid polypeptide reads, in one-letter code: Cysteate synthase (417 aa).

Lys104 bears the N6-(pyridoxal phosphate)lysine mark. Residues Asn131 and Thr371 each coordinate pyridoxal 5'-phosphate.

It belongs to the threonine synthase family. Cysteate synthase subfamily. Homotrimer. Requires pyridoxal 5'-phosphate as cofactor.

The catalysed reaction is O-phospho-L-serine + sulfite + H(+) = L-cysteate + phosphate. It functions in the pathway cofactor biosynthesis; coenzyme M biosynthesis. Functionally, specifically catalyzes the beta-elimination of phosphate from L-phosphoserine and the beta-addition of sulfite to the dehydroalanine intermediate to produce L-cysteate. The sequence is that of Cysteate synthase from Methanococcoides burtonii (strain DSM 6242 / NBRC 107633 / OCM 468 / ACE-M).